Here is a 339-residue protein sequence, read N- to C-terminus: MDATNNGESADQVGIRVGNPEQPNDHTDALGSVGSGGAGSSGLVAGSSHPYGSGAIGQLANGYSSPSSSYRKNVAKMVTDRHAAEYNMRHKNRGMALIFNHEHFEVPTLKSRAGTNVDCENLTRVLKQLDFEVTVYKDCRYKDILRTIEYAASQNHSDSDCILVAILSHGEMGYIYAKDTQYKLDNIWSFFTANHCPSLAGKPKLFFIQACQGDRLDGGVTMQRSQTETDGDSSMSYKIPVHADFLIAYSTVPGFYSWRNTTRGSWFMQSLCAELAANGKRLDILTLLTFVCQRVAVDFESCTPDTPEMHQQKQIPCITTMLTRILRFSDKQLAPAGRV.

A propeptide spanning residues 1 to 28 is cleaved from the precursor; it reads MDATNNGESADQVGIRVGNPEQPNDHTD. The interval 1-45 is disordered; it reads MDATNNGESADQVGIRVGNPEQPNDHTDALGSVGSGGAGSSGLVA. Residues histidine 169 and cysteine 211 contribute to the active site. Residues 218-230 constitute a propeptide that is removed on maturation; that stretch reads GGVTMQRSQTETD.

The protein belongs to the peptidase C14A family. In terms of assembly, heterotetramer that consists of two anti-parallel arranged heterodimers, each one formed by a 21 kDa (p21) and a 12 kDa (p12) subunit. Inactive pro-form can homodimerize. Dronc and Drice can form a stable complex. Interacts with Diap2 (via BIR3 domain) to form a stable complex. May interact with some isoforms of Dark.

Zymogen activated by proteolytic cleavage; cleaved by the initiator caspase Dronc upon apoptosis induction. In terms of biological role, involved in the activation cascade of caspases responsible for apoptosis execution. Acts downstream of rpr. Cleaves baculovirus p35 and lamin DmO in vitro. The chain is Caspase drICE (Drice) from Drosophila melanogaster (Fruit fly).